A 113-amino-acid chain; its full sequence is Cytochrome c55X (113 aa).

The N-terminal stretch at 1 to 26 is a signal peptide; it reads MTVARHAVSRLGLALASFLLFPLALA. Heme c is bound by residues Cys45, Cys48, and His49.

Post-translationally, binds 1 heme c group covalently per subunit.

Its subcellular location is the periplasm. In terms of biological role, monoheme c-type cytochrome. In Stutzerimonas stutzeri (Pseudomonas stutzeri), this protein is Cytochrome c55X (nirC).